The chain runs to 435 residues: AP-2 complex subunit mu (435 aa).

Positions 170 to 434 (RNELFLDVLE…IGRSGIYETR (265 aa)) constitute an MHD domain. 3 residues coordinate a 1,2-diacyl-sn-glycero-3-phospho-(1D-myo-inositol-3,4,5-trisphosphate): lysine 341, lysine 345, and lysine 354.

The protein belongs to the adaptor complexes medium subunit family. In terms of assembly, adaptor protein complex 2 (AP-2) is a heterotetramer composed of two large adaptins (alpha-type subunit and beta-type subunit), a medium adaptin (mu-type subunit) and a small adaptin (sigma-type subunit).

The protein resides in the cell membrane. Its subcellular location is the membrane. It localises to the coated pit. Component of the adaptor complexes which link clathrin to receptors in coated vesicles. Clathrin-associated protein complexes are believed to interact with the cytoplasmic tails of membrane proteins, leading to their selection and concentration. AP50 is a subunit of the plasma membrane adaptor. The complex binds polyphosphoinositide-containing lipids. The chain is AP-2 complex subunit mu (ap2m1) from Xenopus tropicalis (Western clawed frog).